Reading from the N-terminus, the 926-residue chain is Alpha-aminoadipic semialdehyde synthase, mitochondrial (926 aa).

A mitochondrion-targeting transit peptide spans 1–27; it reads MLRAQRLRLARLRACVSRGLHHKPVMA. The lysine-ketoglutarate reductase stretch occupies residues 28–455; that stretch reads LRREDVNAWE…DAVITSNGLL (428 aa). K48, K52, and K56 each carry N6-acetyllysine. The residue at position 93 (K93) is an N6-acetyllysine; alternate. The residue at position 93 (K93) is an N6-succinyllysine; alternate. At K128 the chain carries N6-acetyllysine. K138 bears the N6-acetyllysine; alternate mark. K138 carries the N6-succinyllysine; alternate modification. The residue at position 274 (K274) is an N6-succinyllysine. K286 is subject to N6-acetyllysine; alternate. K286 is subject to N6-succinyllysine; alternate. Position 333 is an N6-succinyllysine (K333). At K458 the chain carries N6-acetyllysine; alternate. K458 is subject to N6-succinyllysine; alternate. The interval 477–926 is saccharopine dehydrogenase; the sequence is MSTKKKVLVL…VFNTQSTIKL (450 aa). The NAD(+) site is built by S488, D512, and Q516. K523 and K535 each carry N6-acetyllysine; alternate. An N6-succinyllysine; alternate mark is found at K523 and K535. NAD(+) contacts are provided by L554, A576, and S577. 577 to 578 lines the L-saccharopine pocket; the sequence is SY. The residue at position 584 (K584) is an N6-acetyllysine; alternate. N6-succinyllysine; alternate is present on K584. 3 residues coordinate NAD(+): L603, D604, and P605. Position 604 (D604) interacts with L-saccharopine. Residue R703 participates in L-saccharopine binding. K707 carries the post-translational modification N6-acetyllysine. 724-726 is a binding site for L-saccharopine; that stretch reads TLR. K732 carries the N6-succinyllysine modification. N6-acetyllysine is present on K739. K761 carries the post-translational modification N6-acetyllysine; alternate. K761 carries the N6-succinyllysine; alternate modification. 2 positions are modified to N6-acetyllysine: K778 and K780.

It in the N-terminal section; belongs to the AlaDH/PNT family. This sequence in the C-terminal section; belongs to the saccharopine dehydrogenase family. As to quaternary structure, homotetramer.

It is found in the mitochondrion. It catalyses the reaction L-saccharopine + NADP(+) + H2O = L-lysine + 2-oxoglutarate + NADPH + H(+). The catalysed reaction is L-saccharopine + NAD(+) + H2O = (S)-2-amino-6-oxohexanoate + L-glutamate + NADH + H(+). Its pathway is amino-acid degradation; L-lysine degradation via saccharopine pathway; glutaryl-CoA from L-lysine: step 1/6. It functions in the pathway amino-acid degradation; L-lysine degradation via saccharopine pathway; glutaryl-CoA from L-lysine: step 2/6. Functionally, bifunctional enzyme that catalyzes the first two steps in lysine degradation. In Rattus norvegicus (Rat), this protein is Alpha-aminoadipic semialdehyde synthase, mitochondrial.